The following is a 603-amino-acid chain: Elongation factor 4 (603 aa).

Positions 2 to 184 constitute a tr-type G domain; sequence NHIRNFSIIA…AVVALIPAPK (183 aa). Residues 14–19 and 131–134 each bind GTP; these read DHGKST and NKMD.

This sequence belongs to the TRAFAC class translation factor GTPase superfamily. Classic translation factor GTPase family. LepA subfamily.

The protein resides in the cell inner membrane. The catalysed reaction is GTP + H2O = GDP + phosphate + H(+). In terms of biological role, required for accurate and efficient protein synthesis under certain stress conditions. May act as a fidelity factor of the translation reaction, by catalyzing a one-codon backward translocation of tRNAs on improperly translocated ribosomes. Back-translocation proceeds from a post-translocation (POST) complex to a pre-translocation (PRE) complex, thus giving elongation factor G a second chance to translocate the tRNAs correctly. Binds to ribosomes in a GTP-dependent manner. This chain is Elongation factor 4, found in Polaromonas naphthalenivorans (strain CJ2).